The following is a 302-amino-acid chain: Quinolinate synthase (302 aa).

Residues H25 and S42 each contribute to the iminosuccinate site. [4Fe-4S] cluster is bound at residue C87. Residues 113 to 115 and S130 contribute to the iminosuccinate site; that span reads YVN. Residue C172 coordinates [4Fe-4S] cluster. Residues 198-200 and T215 each bind iminosuccinate; that span reads HPE. Residue C260 participates in [4Fe-4S] cluster binding.

Belongs to the quinolinate synthase family. Type 2 subfamily. [4Fe-4S] cluster is required as a cofactor.

It localises to the cytoplasm. It carries out the reaction iminosuccinate + dihydroxyacetone phosphate = quinolinate + phosphate + 2 H2O + H(+). It participates in cofactor biosynthesis; NAD(+) biosynthesis; quinolinate from iminoaspartate: step 1/1. Functionally, catalyzes the condensation of iminoaspartate with dihydroxyacetone phosphate to form quinolinate. The sequence is that of Quinolinate synthase from Methanoregula boonei (strain DSM 21154 / JCM 14090 / 6A8).